Here is a 259-residue protein sequence, read N- to C-terminus: Virion protein US10 homolog (259 aa).

The segment at 162–174 (CAHWCCLGHAFGC) is a zinc-finger region.

The protein belongs to the herpesviridae US10 family. Phosphorylated.

The protein localises to the virion tegument. It is found in the host nucleus matrix. The protein is Virion protein US10 homolog of Equine herpesvirus 4 (strain 1942) (EHV-4).